Reading from the N-terminus, the 422-residue chain is Glucose-1-phosphate adenylyltransferase (422 aa).

Alpha-D-glucose 1-phosphate-binding positions include Tyr-109, Gly-175, Glu-190–Lys-191, and Ser-208.

The protein belongs to the bacterial/plant glucose-1-phosphate adenylyltransferase family. Homotetramer.

The enzyme catalyses alpha-D-glucose 1-phosphate + ATP + H(+) = ADP-alpha-D-glucose + diphosphate. Its pathway is glycan biosynthesis; glycogen biosynthesis. Its function is as follows. Involved in the biosynthesis of ADP-glucose, a building block required for the elongation reactions to produce glycogen. Catalyzes the reaction between ATP and alpha-D-glucose 1-phosphate (G1P) to produce pyrophosphate and ADP-Glc. The protein is Glucose-1-phosphate adenylyltransferase of Shewanella amazonensis (strain ATCC BAA-1098 / SB2B).